Here is a 145-residue protein sequence, read N- to C-terminus: Immunoglobulin iota chain (145 aa).

An N-terminal signal peptide occupies residues 1-19 (MSWAPVLLMLFVYCTGCGP). The interval 20 to 41 (QPVLHQPPAMSSALGTTIRLTC) is framework-1. The Ig-like V-type domain occupies 20–132 (QPVLHQPPAM…EKEEREREWE (113 aa)). A disulfide bond links C41 and C115. The complementarity-determining-1 stretch occupies residues 42 to 56 (TLRNDHDIGVYSVYW). The segment at 57–70 (YQQRPGHPPRFLLR) is framework-2. Residues 71-81 (YFSQSDKSQGP) form a complementarity-determining-2 region. The tract at residues 82–115 (QVPPRFSGSKDVARNRGYLSISELQPEDEAMYYC) is framework-3. Over residues 121–130 (SSEKEERERE) the composition is skewed to basic and acidic residues. Positions 121–145 (SSEKEEREREWEEEMEPTAARTRVP) are disordered.

Belongs to the immunoglobulin superfamily. Interacts with IGLL1. Interacts with SYNV1/HRD1 (via N-terminus); this interaction leads to increased VPREB1 ubiquitination and degradation in pre-B cells, possibly through a lysosomal, not proteasomal, pathway. Only expressed by pre-B-cells.

It is found in the endoplasmic reticulum. In terms of biological role, associates with the Ig-mu chain to form a molecular complex that is expressed on the surface of pre-B-cells. This complex presumably regulates Ig gene rearrangements in the early steps of B-cell differentiation. This Homo sapiens (Human) protein is Immunoglobulin iota chain (VPREB1).